Here is a 224-residue protein sequence, read N- to C-terminus: 2-C-methyl-D-erythritol 4-phosphate cytidylyltransferase (224 aa).

Belongs to the IspD/TarI cytidylyltransferase family. IspD subfamily.

It carries out the reaction 2-C-methyl-D-erythritol 4-phosphate + CTP + H(+) = 4-CDP-2-C-methyl-D-erythritol + diphosphate. It functions in the pathway isoprenoid biosynthesis; isopentenyl diphosphate biosynthesis via DXP pathway; isopentenyl diphosphate from 1-deoxy-D-xylulose 5-phosphate: step 2/6. Catalyzes the formation of 4-diphosphocytidyl-2-C-methyl-D-erythritol from CTP and 2-C-methyl-D-erythritol 4-phosphate (MEP). The chain is 2-C-methyl-D-erythritol 4-phosphate cytidylyltransferase from Caldicellulosiruptor saccharolyticus (strain ATCC 43494 / DSM 8903 / Tp8T 6331).